The following is a 217-amino-acid chain: MTRGRFITLEGLEGAGKSTALTRVREYLQRQGIDAVMTREPGGTPLGERIRALLLGQSEPPMAPATEALLMFAARSEHLDKRIWPALERGQWVVCDRFTDASYAYQGWGRGLGAERIAALEDWTQGALRPDLTLWLDVPVETGLARAAGRGEAPDRFEQERDGFFERVHEGYAALAERFPERIRRVDAGQPLEAVLTALEEALASAVTRWLSGTEAH.

Residue 11–18 (GLEGAGKS) participates in ATP binding.

This sequence belongs to the thymidylate kinase family.

It carries out the reaction dTMP + ATP = dTDP + ADP. In terms of biological role, phosphorylation of dTMP to form dTDP in both de novo and salvage pathways of dTTP synthesis. The protein is Thymidylate kinase of Alkalilimnicola ehrlichii (strain ATCC BAA-1101 / DSM 17681 / MLHE-1).